The primary structure comprises 628 residues: Kinesin-like protein tea2 (628 aa).

The tract at residues 2–122 (SSSSSKPVNT…TTSQQTNSKG (121 aa)) is interaction with mal3. Ser82 bears the Phosphoserine mark. A Kinesin motor domain is found at 132–460 (GIITSIRIRP…LKFASRAQNL (329 aa)). Residue 218 to 225 (GMTGTGKT) coordinates ATP. Positions 530–557 (LRMEELLSDHNFEIADLRDELQDKEQII) form a coiled coil. Residues 588 to 628 (VTRGSRSSSDQFSNETKTEILPDDQQQSKKDSVTQETQLLS) are disordered. Residues 589-602 (TRGSRSSSDQFSNE) are compositionally biased toward polar residues. The span at 603 to 620 (TKTEILPDDQQQSKKDSV) shows a compositional bias: basic and acidic residues.

Belongs to the TRAFAC class myosin-kinesin ATPase superfamily. Kinesin family. In terms of assembly, interacts with mal3 and tip1.

It is found in the cytoplasm. The protein localises to the cytoskeleton. Promotes microtubule growth, possibly through interactions with the microtubule end, and is important for establishing and maintaining polarized growth along the long axis of the cell. Acts as a kinesin motor protein that moves along microtubules and is required for proper localization of tea1 and tip1 to the cell tips and microtubules, respectively. ATPase activity stimulated via interaction with mal3. The protein is Kinesin-like protein tea2 of Schizosaccharomyces pombe (strain 972 / ATCC 24843) (Fission yeast).